A 406-amino-acid chain; its full sequence is Succinylornithine transaminase (406 aa).

K252 is modified (N6-(pyridoxal phosphate)lysine).

It belongs to the class-III pyridoxal-phosphate-dependent aminotransferase family. AstC subfamily. It depends on pyridoxal 5'-phosphate as a cofactor.

It carries out the reaction N(2)-succinyl-L-ornithine + 2-oxoglutarate = N-succinyl-L-glutamate 5-semialdehyde + L-glutamate. Its pathway is amino-acid degradation; L-arginine degradation via AST pathway; L-glutamate and succinate from L-arginine: step 3/5. Catalyzes the transamination of N(2)-succinylornithine and alpha-ketoglutarate into N(2)-succinylglutamate semialdehyde and glutamate. Can also act as an acetylornithine aminotransferase. The sequence is that of Succinylornithine transaminase from Escherichia coli (strain SMS-3-5 / SECEC).